The chain runs to 237 residues: Sugar fermentation stimulation protein homolog (237 aa).

It belongs to the SfsA family.

The protein is Sugar fermentation stimulation protein homolog of Actinobacillus pleuropneumoniae serotype 5b (strain L20).